The sequence spans 256 residues: Small ribosomal subunit protein eS1 (256 aa).

Alanine 2 bears the N-acetylalanine; partial mark.

This sequence belongs to the eukaryotic ribosomal protein eS1 family. In terms of assembly, component of the small ribosomal subunit. Mature ribosomes consist of a small (40S) and a large (60S) subunit. The 40S subunit contains about 33 different proteins and 1 molecule of RNA (18S). The 60S subunit contains about 49 different proteins and 3 molecules of RNA (25S, 5.8S and 5S).

It localises to the cytoplasm. This Lentinula edodes (Shiitake mushroom) protein is Small ribosomal subunit protein eS1.